We begin with the raw amino-acid sequence, 219 residues long: Endo-type membrane-bound lytic murein transglycosylase A-like protein (219 aa).

It belongs to the transglycosylase Slt family.

The catalysed reaction is Endolytic cleavage of the (1-&gt;4)-beta-glycosidic linkage between N-acetylmuramic acid (MurNAc) and N-acetylglucosamine (GlcNAc) residues in peptidoglycan with concomitant formation of a 1,6-anhydrobond in the MurNAc residue.. Its function is as follows. Murein-degrading enzyme. May play a role in recycling of muropeptides during cell elongation and/or cell division (Potential). This is Endo-type membrane-bound lytic murein transglycosylase A-like protein from Shigella flexneri.